A 485-amino-acid chain; its full sequence is Glutamyl-tRNA(Gln) amidotransferase subunit A (485 aa).

Active-site charge relay system residues include lysine 78 and serine 153. Residue serine 177 is the Acyl-ester intermediate of the active site.

It belongs to the amidase family. GatA subfamily. In terms of assembly, heterotrimer of A, B and C subunits.

The catalysed reaction is L-glutamyl-tRNA(Gln) + L-glutamine + ATP + H2O = L-glutaminyl-tRNA(Gln) + L-glutamate + ADP + phosphate + H(+). Its function is as follows. Allows the formation of correctly charged Gln-tRNA(Gln) through the transamidation of misacylated Glu-tRNA(Gln) in organisms which lack glutaminyl-tRNA synthetase. The reaction takes place in the presence of glutamine and ATP through an activated gamma-phospho-Glu-tRNA(Gln). The polypeptide is Glutamyl-tRNA(Gln) amidotransferase subunit A (Bacillus cereus (strain ATCC 14579 / DSM 31 / CCUG 7414 / JCM 2152 / NBRC 15305 / NCIMB 9373 / NCTC 2599 / NRRL B-3711)).